The primary structure comprises 74 residues: Small ribosomal subunit protein bS18 (74 aa).

This sequence belongs to the bacterial ribosomal protein bS18 family. As to quaternary structure, part of the 30S ribosomal subunit. Forms a tight heterodimer with protein bS6.

Functionally, binds as a heterodimer with protein bS6 to the central domain of the 16S rRNA, where it helps stabilize the platform of the 30S subunit. This chain is Small ribosomal subunit protein bS18, found in Sphingopyxis alaskensis (strain DSM 13593 / LMG 18877 / RB2256) (Sphingomonas alaskensis).